A 241-amino-acid polypeptide reads, in one-letter code: General transcription factor IIF subunit 2 (241 aa).

The protein belongs to the TFIIF beta subunit family. In terms of assembly, heterodimer of an alpha and a beta subunit.

Its subcellular location is the nucleus. TFIIF is a general transcription initiation factor that binds to RNA polymerase II and helps to recruit it to the initiation complex in collaboration with TFIIB. The polypeptide is General transcription factor IIF subunit 2 (gtf2f2) (Dictyostelium discoideum (Social amoeba)).